Here is a 460-residue protein sequence, read N- to C-terminus: Probable elastin-binding protein EbpS (460 aa).

The segment covering 1–40 (MSNNNFKDDFEKNRQSINPDEHQTELKEDDKTNENKKEAD) has biased composition (basic and acidic residues). The interval 1-277 (MSNNNFKDDF…NQYNDQSEGK (277 aa)) is disordered. Low complexity predominate over residues 41–57 (SQNSLSNNSNQQFPPRN). Over residues 74–128 (QQDDKHQKNSDAKTTEGSLDDRYDEAQLQQQHDKSQQQNKTEKQSQDNRMKDGKD) the composition is skewed to basic and acidic residues. Residues 177–192 (ATGAGIAGAAGVAGAA) are compositionally biased toward low complexity. Residues 203–226 (DKQDSKHSNHENDEKSVKNDDQKQ) are compositionally biased toward basic and acidic residues. Low complexity predominate over residues 264–273 (SNQNNQYNDQ). The helical transmembrane segment at 285-305 (ILLPLIAAILILGAIAIFGGM) threads the bilayer. The segment covering 313 to 359 (SKSDDQKIANQSKKDSDKKDGAQSEDNKDKKSDSNKDKKSDSDKNAD) has biased composition (basic and acidic residues). The interval 313–411 (SKSDDQKIAN…NQQATQGQQS (99 aa)) is disordered. The segment covering 364 to 411 (NSSSNPNATSTNNNDNVANNNSNYTNQNQQDNANQNSNNQQATQGQQS) has biased composition (low complexity). Residues 410-458 (QSHTVYGQENLYRIAIQYYGEGTQANVDKIKRANGLSSNNIHNGQTLVI) enclose the LysM domain.

The protein localises to the cell membrane. In Staphylococcus epidermidis (strain ATCC 35984 / DSM 28319 / BCRC 17069 / CCUG 31568 / BM 3577 / RP62A), this protein is Probable elastin-binding protein EbpS (ebpS).